The chain runs to 104 residues: MPRQEPKQPGYVCPTTGRVAVLVKDYADSDLNGDASAYWFNPEAEGWGMDPWKLVEGVDPHTQGCSMDVCFADGSSKTVGPLMTFFLSAKDAARLAALKGQRQE.

In Escherichia coli, this protein is Protein KleF (kleF).